We begin with the raw amino-acid sequence, 388 residues long: Riboflavin biosynthesis protein RibBA (388 aa).

The DHBP synthase stretch occupies residues 1–186 (MEELREAFEE…MDDVWREFVK (186 aa)). D-ribulose 5-phosphate contacts are provided by residues 21 to 22 (RE), Asp-26, 125 to 129 (RKGHT), and Glu-149. Glu-22 contacts Mg(2+). A Mg(2+)-binding site is contributed by His-128. The interval 187–388 (RKLLMKKKAE…LEEIFREVNS (202 aa)) is GTP cyclohydrolase II. 235–239 (RIHSE) contributes to the GTP binding site. Zn(2+) is bound by residues Cys-240, Cys-251, and Cys-253. Residues Gln-256, 277–279 (EGR), and Thr-299 contribute to the GTP site. The active-site Proton acceptor; for GTP cyclohydrolase activity is the Asp-311. Arg-313 serves as the catalytic Nucleophile; for GTP cyclohydrolase activity. Residues Thr-334 and Lys-339 each coordinate GTP.

This sequence in the N-terminal section; belongs to the DHBP synthase family. The protein in the C-terminal section; belongs to the GTP cyclohydrolase II family. Requires Mg(2+) as cofactor. The cofactor is Mn(2+). It depends on Zn(2+) as a cofactor.

It carries out the reaction D-ribulose 5-phosphate = (2S)-2-hydroxy-3-oxobutyl phosphate + formate + H(+). The enzyme catalyses GTP + 4 H2O = 2,5-diamino-6-hydroxy-4-(5-phosphoribosylamino)-pyrimidine + formate + 2 phosphate + 3 H(+). Its pathway is cofactor biosynthesis; riboflavin biosynthesis; 2-hydroxy-3-oxobutyl phosphate from D-ribulose 5-phosphate: step 1/1. It functions in the pathway cofactor biosynthesis; riboflavin biosynthesis; 5-amino-6-(D-ribitylamino)uracil from GTP: step 1/4. Its function is as follows. Catalyzes the conversion of D-ribulose 5-phosphate to formate and 3,4-dihydroxy-2-butanone 4-phosphate. Catalyzes the conversion of GTP to 2,5-diamino-6-ribosylamino-4(3H)-pyrimidinone 5'-phosphate (DARP), formate and pyrophosphate. This Thermotoga maritima (strain ATCC 43589 / DSM 3109 / JCM 10099 / NBRC 100826 / MSB8) protein is Riboflavin biosynthesis protein RibBA.